The primary structure comprises 217 residues: MRYTVLIALQGALLLLLLIDDGQGQSPYPYPGMPCNSSRQCGLGTCVHSRCAHCSSDGTLCSPEDPTMVWPCCPESSCQLVVGLPSLVNHYNCLPNQCTDSSQCPGGFGCMTRRSKCELCKADGEACNSPYLDWRKDKECCSGYCHTEARGLEGVCIDPKKIFCTPKNPWQLAPYPPSYHQPTTLRPPTSLYDSWLMSGFLVKSTTAPSTQEEEDDY.

The N-terminal stretch at 1–24 (MRYTVLIALQGALLLLLLIDDGQG) is a signal peptide.

This is an uncharacterized protein from Aedes vexans (Inland floodwater mosquito).